Reading from the N-terminus, the 74-residue chain is Auswaprin-a (74 aa).

A signal peptide spans 1–24 (MSSGGLLLLLGLLTLWGVLTPVSS). In terms of domain architecture, WAP spans 27 to 71 (RPKKPGLCPPRPQKPCVKECKNDWSCSGQQKCCNYGCIDECRDPI). 4 disulfides stabilise this stretch: cysteine 34-cysteine 59, cysteine 42-cysteine 63, cysteine 46-cysteine 58, and cysteine 52-cysteine 67.

This sequence belongs to the venom waprin family. As to expression, expressed by the venom gland.

Its subcellular location is the secreted. Functionally, damages membranes of susceptible bacteria. Has no hemolytic activity. Not toxic to mice. Does not inhibit the proteinases elastase and cathepsin G. This Pseudechis australis (Mulga snake) protein is Auswaprin-a.